The chain runs to 233 residues: CVAQTSEWEQEGSTNAVLEGESDPEGAVSWGSETQVSDEGGVEGGQGFSEPPEEAKLFVGNLPYDVDSEKLAGIFDAAGVVEIAEVIYNRETDRSRGFGFVTMSTVEEAEKAVELLNGYDMDGRQLTVNKAAPRGSPERAPRGDFEPSCRVYVGNLPWDVDTSRLEQLFSEHGKVVSARVVSDRETGRSRGFGFVTMSSESEVNDAIAALDGQTLDGRAVRVNVAEERPRRAF.

Residues 1–16 (CVAQTSEWEQEGSTNA) show a composition bias toward polar residues. The segment at 1–52 (CVAQTSEWEQEGSTNAVLEGESDPEGAVSWGSETQVSDEGGVEGGQGFSEPP) is disordered. RRM domains follow at residues 55 to 133 (AKLF…KAAP) and 149 to 227 (CRVY…VAEE).

Its subcellular location is the plastid. It is found in the chloroplast. Probably involved in the 3'-end processing of chloroplast mRNA's. In Spinacia oleracea (Spinach), this protein is 28 kDa ribonucleoprotein, chloroplastic.